The following is a 1526-amino-acid chain: uncharacterized protein (1526 aa).

16 WD repeats span residues 334–376 (CTKE…EHIS), 862–901 (KILG…ELLT), 904–945 (GHNS…KTFK), 946–985 (GHTS…CLYI), 988–1027 (GHTG…CFYI), 1030–1069 (GHTS…CLYT), 1072–1111 (GHTS…CLYT), 1114–1153 (GYTS…CLYT), 1156–1195 (GHTN…CLYI), 1198–1237 (GHTS…CLCT), 1240–1279 (GHTS…CLHT), 1282–1321 (GHTN…CLHT), 1324–1363 (GHTS…CLYT), 1366–1405 (GHTN…CLYT), 1408–1447 (GHNN…CLYT), and 1450–1491 (GHIN…KTLK). Residues 823 to 862 (MVLEGRDLSHTVIIGADFTNTSLRCVNFTEANLAYSVFTK) enclose the Pentapeptide repeat domain.

This is an uncharacterized protein from Nostoc sp. (strain PCC 7120 / SAG 25.82 / UTEX 2576).